Consider the following 335-residue polypeptide: Carboxylesterase 1 (335 aa).

The Involved in the stabilization of the negatively charged intermediate by the formation of the oxyanion hole signature appears at 90 to 92; it reads HGG. Residues 92–93, S169, and A170 contribute to the paraoxon site; that span reads GG. S169 is an active-site residue. Residues D276 and H306 contribute to the active site.

It belongs to the 'GDXG' lipolytic enzyme family.

The catalysed reaction is a carboxylic ester + H2O = an alcohol + a carboxylate + H(+). Its activity is regulated as follows. Is inhibited by the organophosphates paraoxon and dimethylchlorophosphate (DMCP). In terms of biological role, carboxylesterase acting on esters with varying acyl chain length. In Actinidia eriantha (Velvet vine), this protein is Carboxylesterase 1 (CXE1).